The primary structure comprises 493 residues: Dipeptide permease D (493 aa).

Helical transmembrane passes span 14-34, 49-69, 91-111, 138-158, 167-187, 212-232, 235-255, 267-287, 312-332, 344-364, 379-399, 413-433, and 458-478; these read VVAL…LLIL, ELFS…GYLA, LVLG…AIIV, GGFS…PIAC, WAMG…IFLC, NWGW…VLFW, WSVY…AKIY, LGLI…AQQG, MFQS…AWLV, IWGK…ILTL, LMVL…PVAM, VLTG…AGVI, and VFEQ…LIWL.

The protein belongs to the major facilitator superfamily. Proton-dependent oligopeptide transporter (POT/PTR) (TC 2.A.17) family. DtpD subfamily.

It localises to the cell inner membrane. Its function is as follows. Probable proton-dependent permease that transports dipeptides. This Salmonella choleraesuis (strain SC-B67) protein is Dipeptide permease D.